A 550-amino-acid polypeptide reads, in one-letter code: Metal transporter Nramp4 (550 aa).

A compositionally biased stretch (basic and acidic residues) spans 1 to 13 (MEEGAKIGREHEQ). Positions 1–37 (MEEGAKIGREHEQQQQQHGRVNGSGRVAAVGGGSGGG) are disordered. Low complexity predominate over residues 14-29 (QQQQHGRVNGSGRVAA). A run of 12 helical transmembrane segments spans residues 72–92 (FLAH…PSNL), 105–125 (SLLW…SLAA), 151–171 (LWLL…LGTA), 177–197 (LLHI…FLIL), 207–227 (MEFT…MELG), 255–275 (VAMF…SLVL), 292–312 (FFLL…VAIV), 354–374 (VYGV…SYAG), 388–408 (IIYL…CSIG), 416–436 (IINI…IPLI), 457–477 (IAWI…CTSF), and 492–512 (AIIS…LIYL).

It belongs to the NRAMP (TC 2.A.55) family.

Its subcellular location is the membrane. Functionally, probable metal transporter. The sequence is that of Metal transporter Nramp4 (NRAMP4) from Oryza sativa subsp. japonica (Rice).